Reading from the N-terminus, the 335-residue chain is N-acetyl-gamma-glutamyl-phosphate reductase (335 aa).

The active site involves Cys-147.

This sequence belongs to the NAGSA dehydrogenase family. Type 1 subfamily.

The protein localises to the cytoplasm. It carries out the reaction N-acetyl-L-glutamate 5-semialdehyde + phosphate + NADP(+) = N-acetyl-L-glutamyl 5-phosphate + NADPH + H(+). The protein operates within amino-acid biosynthesis; L-arginine biosynthesis; N(2)-acetyl-L-ornithine from L-glutamate: step 3/4. In terms of biological role, catalyzes the NADPH-dependent reduction of N-acetyl-5-glutamyl phosphate to yield N-acetyl-L-glutamate 5-semialdehyde. This Campylobacter hominis (strain ATCC BAA-381 / DSM 21671 / CCUG 45161 / LMG 19568 / NCTC 13146 / CH001A) protein is N-acetyl-gamma-glutamyl-phosphate reductase.